A 574-amino-acid polypeptide reads, in one-letter code: Septation ring formation regulator EzrA (574 aa).

Residues methionine 1 to isoleucine 7 are Extracellular-facing. A helical membrane pass occupies residues leucine 8–methionine 26. 5 coiled-coil regions span residues methionine 26–leucine 47, lysine 105–threonine 189, glutamate 258–serine 346, serine 375–aspartate 415, and serine 455–glutamate 494. Over arginine 27–phenylalanine 574 the chain is Cytoplasmic.

The protein belongs to the EzrA family.

Its subcellular location is the cell membrane. Negative regulator of FtsZ ring formation; modulates the frequency and position of FtsZ ring formation. Inhibits FtsZ ring formation at polar sites. Interacts either with FtsZ or with one of its binding partners to promote depolymerization. The polypeptide is Septation ring formation regulator EzrA (Streptococcus sanguinis (strain SK36)).